A 384-amino-acid chain; its full sequence is Conidiophore development protein hymA (384 aa).

Over residues 362–374 (EPIEPSRSAREPS) the composition is skewed to basic and acidic residues. Positions 362–384 (EPIEPSRSAREPSRSTANTTTVA) are disordered.

Belongs to the Mo25 family.

The protein localises to the cytoplasm. Its function is as follows. Required for conidiophore development. The polypeptide is Conidiophore development protein hymA (hymA) (Emericella nidulans (strain FGSC A4 / ATCC 38163 / CBS 112.46 / NRRL 194 / M139) (Aspergillus nidulans)).